A 139-amino-acid polypeptide reads, in one-letter code: Small ribosomal subunit protein bS6 (139 aa).

Positions 119 to 139 (LKGASKVETPTGPESTDIQEK) are disordered. Residues 130-139 (GPESTDIQEK) show a composition bias toward polar residues.

It belongs to the bacterial ribosomal protein bS6 family.

Functionally, binds together with bS18 to 16S ribosomal RNA. The chain is Small ribosomal subunit protein bS6 from Borreliella burgdorferi (strain ZS7) (Borrelia burgdorferi).